The following is an 873-amino-acid chain: Bifunctional heparan sulfate N-deacetylase/N-sulfotransferase 3 (873 aa).

The Cytoplasmic segment spans residues 1 to 13 (MSFIMKPHRHFQR). Residues 14–34 (TLILLATFCMVSIIISAYYLY) form a helical; Signal-anchor for type II membrane protein membrane-spanning segment. Residues 35–873 (SGYKQESEVS…WLRQELQKVR (839 aa)) lie on the Lumenal side of the membrane. Residues 36 to 589 (GYKQESEVSG…KRHRDIWSKE (554 aa)) are heparan sulfate N-deacetylase 3. N-linked (GlcNAc...) asparagine glycosylation is found at Asn146, Asn226, Asn342, and Asn392. The segment at 590-873 (KTCDRLPKFL…WLRQELQKVR (284 aa)) is heparan sulfate N-sulfotransferase 3. The active-site For sulfotransferase activity is Lys605. 3'-phosphoadenylyl sulfate is bound at residue 605 to 609 (KTGTT). Asn658 is a glycosylation site (N-linked (GlcNAc...) asparagine). A 3'-phosphoadenylyl sulfate-binding site is contributed by Ser703. Asn794 carries N-linked (GlcNAc...) asparagine glycosylation. Cys809 and Cys819 are oxidised to a cystine. 824–828 (KGRKY) lines the 3'-phosphoadenylyl sulfate pocket.

This sequence belongs to the sulfotransferase 1 family. NDST subfamily. Monomer. In terms of tissue distribution, strongly expressed strongly in brain. Expressed at high level at embryonic day 11 compared to other stages of development. Weakly expressed in adult heart, kidney, muscle, endothelial cells and testis but not in other tissues.

The protein localises to the golgi apparatus membrane. The catalysed reaction is alpha-D-glucosaminyl-[heparan sulfate](n) + 3'-phosphoadenylyl sulfate = N-sulfo-alpha-D-glucosaminyl-[heparan sulfate](n) + adenosine 3',5'-bisphosphate + 2 H(+). It participates in glycan metabolism; heparan sulfate biosynthesis. Its pathway is glycan metabolism; heparin biosynthesis. Its function is as follows. Essential bifunctional enzyme that catalyzes both the N-deacetylation and the N-sulfation of glucosamine (GlcNAc) of the glycosaminoglycan in heparan sulfate. Modifies the GlcNAc-GlcA disaccharide repeating sugar backbone to make N-sulfated heparosan, a prerequisite substrate for later modifications in heparin biosynthesis. Has high deacetylase activity but low sulfotransferase activity. This Mus musculus (Mouse) protein is Bifunctional heparan sulfate N-deacetylase/N-sulfotransferase 3 (Ndst3).